A 424-amino-acid chain; its full sequence is UPF0761 membrane protein Smlt0865 (424 aa).

A run of 6 helical transmembrane segments spans residues 48–68 (VFAL…FPVF), 101–121 (SAGQ…LITL), 144–164 (FLVY…SLAV), 181–201 (WLAE…CITL), 216–236 (AVPG…GIGA), and 251–271 (VAFV…VLLG).

The protein belongs to the UPF0761 family.

Its subcellular location is the cell inner membrane. This chain is UPF0761 membrane protein Smlt0865, found in Stenotrophomonas maltophilia (strain K279a).